A 95-amino-acid polypeptide reads, in one-letter code: uncharacterized protein (95 aa).

The presence of the two linear plasmids, termed pGKL1 and pGKL2, in strains of Kluyveromyces lactis confers the killer phenotype to the host cell, by promoting the secretion of a toxin able to inhibit the growth of sensitive strains. This is an uncharacterized protein from Kluyveromyces lactis (strain ATCC 8585 / CBS 2359 / DSM 70799 / NBRC 1267 / NRRL Y-1140 / WM37) (Yeast).